The following is a 95-amino-acid chain: Integration host factor subunit alpha (95 aa).

The segment at 51-71 (NFDLRDKNERPGRNPKTGEDI) is disordered. The segment covering 53–69 (DLRDKNERPGRNPKTGE) has biased composition (basic and acidic residues).

Belongs to the bacterial histone-like protein family. Heterodimer of an alpha and a beta chain.

Functionally, this protein is one of the two subunits of integration host factor, a specific DNA-binding protein that functions in genetic recombination as well as in transcriptional and translational control. The polypeptide is Integration host factor subunit alpha (Vibrio vulnificus (strain CMCP6)).